The primary structure comprises 343 residues: MLISTPHFWWKDKSFLRFLLTPVSWGYGYFSHRCMVRELPVIDLPVLCIGNFTCGGAGKTPVVIAFAKVAKELGFLPGVVSRGYGGAVKGVHLINEQFDNARDVGDEALLLARHAFVAISSNRYVAAQRLKEEGCNLILMDDGFQSRRLYMDYALLVVDAMRGFGNGAVFPAGPLRAPLKTQFSLMDSVLLIGHSDACENVVFLVTRTGKALHHAHLKSLASDEVMGKSFLAFAGIGNPNKFFKSIKELSGRVVQTYSYPDHYFFTDTDLKNLIQQAKMNNLWLATTAKDYTRIQTSHVQKDLKNLIVFDVEVDFVQEDFCRMILEEVMSRFRERKTLFNLHF.

ATP is bound at residue 53–60; that stretch reads TCGGAGKT.

Belongs to the LpxK family.

It carries out the reaction a lipid A disaccharide + ATP = a lipid IVA + ADP + H(+). Its pathway is glycolipid biosynthesis; lipid IV(A) biosynthesis; lipid IV(A) from (3R)-3-hydroxytetradecanoyl-[acyl-carrier-protein] and UDP-N-acetyl-alpha-D-glucosamine: step 6/6. Its function is as follows. Transfers the gamma-phosphate of ATP to the 4'-position of a tetraacyldisaccharide 1-phosphate intermediate (termed DS-1-P) to form tetraacyldisaccharide 1,4'-bis-phosphate (lipid IVA). This chain is Tetraacyldisaccharide 4'-kinase, found in Bartonella quintana (strain Toulouse) (Rochalimaea quintana).